The chain runs to 289 residues: S-methyl-5'-thioadenosine phosphorylase (289 aa).

Residues serine 11, arginine 53–histidine 54, and serine 86–alanine 87 contribute to the phosphate site. Methionine 187 provides a ligand contact to substrate. Threonine 188 serves as a coordination point for phosphate. Aspartate 211 to aspartate 213 is a binding site for substrate.

It belongs to the PNP/MTAP phosphorylase family. MTAP subfamily. Homohexamer. Dimer of a homotrimer.

It catalyses the reaction S-methyl-5'-thioadenosine + phosphate = 5-(methylsulfanyl)-alpha-D-ribose 1-phosphate + adenine. Its pathway is amino-acid biosynthesis; L-methionine biosynthesis via salvage pathway; S-methyl-5-thio-alpha-D-ribose 1-phosphate from S-methyl-5'-thioadenosine (phosphorylase route): step 1/1. Functionally, catalyzes the reversible phosphorylation of S-methyl-5'-thioadenosine (MTA) to adenine and 5-methylthioribose-1-phosphate. Involved in the breakdown of MTA, a major by-product of polyamine biosynthesis. Responsible for the first step in the methionine salvage pathway after MTA has been generated from S-adenosylmethionine. Has broad substrate specificity with 6-aminopurine nucleosides as preferred substrates. In Thermosynechococcus vestitus (strain NIES-2133 / IAM M-273 / BP-1), this protein is S-methyl-5'-thioadenosine phosphorylase.